Consider the following 238-residue polypeptide: Ribonuclease PH (238 aa).

Phosphate contacts are provided by residues arginine 86 and 124–126; that span reads GTR.

The protein belongs to the RNase PH family. As to quaternary structure, homohexameric ring arranged as a trimer of dimers.

It carries out the reaction tRNA(n+1) + phosphate = tRNA(n) + a ribonucleoside 5'-diphosphate. Functionally, phosphorolytic 3'-5' exoribonuclease that plays an important role in tRNA 3'-end maturation. Removes nucleotide residues following the 3'-CCA terminus of tRNAs; can also add nucleotides to the ends of RNA molecules by using nucleoside diphosphates as substrates, but this may not be physiologically important. Probably plays a role in initiation of 16S rRNA degradation (leading to ribosome degradation) during starvation. This chain is Ribonuclease PH, found in Acinetobacter baumannii (strain AB307-0294).